The chain runs to 490 residues: Bifunctional protein HldE (490 aa).

Positions 1–330 (MERKNVESLF…GSLGFQHGEG (330 aa)) are ribokinase. 205–208 (NRKE) is a binding site for ATP. Residue D275 is part of the active site. The tract at residues 356-490 (FTNGCFDLLH…EKILKAYGEE (135 aa)) is cytidylyltransferase.

The protein in the N-terminal section; belongs to the carbohydrate kinase PfkB family. In the C-terminal section; belongs to the cytidylyltransferase family. As to quaternary structure, homodimer.

It catalyses the reaction D-glycero-beta-D-manno-heptose 7-phosphate + ATP = D-glycero-beta-D-manno-heptose 1,7-bisphosphate + ADP + H(+). The catalysed reaction is D-glycero-beta-D-manno-heptose 1-phosphate + ATP + H(+) = ADP-D-glycero-beta-D-manno-heptose + diphosphate. The protein operates within nucleotide-sugar biosynthesis; ADP-L-glycero-beta-D-manno-heptose biosynthesis; ADP-L-glycero-beta-D-manno-heptose from D-glycero-beta-D-manno-heptose 7-phosphate: step 1/4. It participates in nucleotide-sugar biosynthesis; ADP-L-glycero-beta-D-manno-heptose biosynthesis; ADP-L-glycero-beta-D-manno-heptose from D-glycero-beta-D-manno-heptose 7-phosphate: step 3/4. Its function is as follows. Catalyzes the phosphorylation of D-glycero-D-manno-heptose 7-phosphate at the C-1 position to selectively form D-glycero-beta-D-manno-heptose-1,7-bisphosphate. Catalyzes the ADP transfer from ATP to D-glycero-beta-D-manno-heptose 1-phosphate, yielding ADP-D-glycero-beta-D-manno-heptose. The protein is Bifunctional protein HldE of Geobacter sulfurreducens (strain ATCC 51573 / DSM 12127 / PCA).